A 352-amino-acid chain; its full sequence is MRVLGIETTCDETAAAVVRLEPGGAGEILSNEVMSQIAEHAAYGGVVPEIAARAHIDIIDRLVLRALAHAGTRLADLDGIAAAAGPGLIGGVIVGLTTAKALALASRKPFIAVNHLEAHALTARLTDALEFPYLLLLVSGGHTQLVAVRGVGDYLRLGSTVDDAVGEAFDKIAKMLGLPYPGGPEVEKRAAEGNAARFDFPRPMLGRPKPDFSLSGLKTAVRLEMERLNSLSPTDVADLCASFQAAVVDMIIDRSRVGLRLFRETVGPSNAMVVAGGVAANGAIRRALMRFCGESGMRLVLPPPQLCTDNGAMIAWAGLERLSLGLIDDLTFAARARWPLDANAEAVHHGKA.

The Fe cation site is built by histidine 115 and histidine 119. Substrate contacts are provided by residues 137–141 (LVSGG), aspartate 170, glycine 183, and asparagine 281. Aspartate 309 contacts Fe cation.

It belongs to the KAE1 / TsaD family. It depends on Fe(2+) as a cofactor.

The protein localises to the cytoplasm. The enzyme catalyses L-threonylcarbamoyladenylate + adenosine(37) in tRNA = N(6)-L-threonylcarbamoyladenosine(37) in tRNA + AMP + H(+). In terms of biological role, required for the formation of a threonylcarbamoyl group on adenosine at position 37 (t(6)A37) in tRNAs that read codons beginning with adenine. Is involved in the transfer of the threonylcarbamoyl moiety of threonylcarbamoyl-AMP (TC-AMP) to the N6 group of A37, together with TsaE and TsaB. TsaD likely plays a direct catalytic role in this reaction. The protein is tRNA N6-adenosine threonylcarbamoyltransferase of Methylocapsa acidiphila.